We begin with the raw amino-acid sequence, 512 residues long: Cytochrome P450 26B1 (512 aa).

C441 lines the heme pocket.

The protein belongs to the cytochrome P450 family. Heme serves as cofactor.

It localises to the endoplasmic reticulum membrane. The protein localises to the microsome membrane. The catalysed reaction is all-trans-retinoate + reduced [NADPH--hemoprotein reductase] + O2 = all-trans-4-hydroxyretinoate + oxidized [NADPH--hemoprotein reductase] + H2O + H(+). It carries out the reaction all-trans-retinoate + reduced [NADPH--hemoprotein reductase] + O2 = all-trans-18-hydroxyretinoate + oxidized [NADPH--hemoprotein reductase] + H2O + H(+). Functionally, a cytochrome P450 monooxygenase involved in the metabolism of retinoates (RAs), the active metabolites of vitamin A, and critical signaling molecules in animals. RAs exist as at least four different isomers: all-trans-RA (atRA), 9-cis-RA, 13-cis-RA, and 9,13-dicis-RA, where atRA is considered to be the biologically active isomer, although 9-cis-RA and 13-cis-RA also have activity. Catalyzes the hydroxylation of atRA primarily at C-4 and C-18, thereby contributing to the regulation of atRA homeostasis and signaling. Hydroxylation of atRA limits its biological activity and initiates a degradative process leading to its eventual elimination. Involved in the convertion of atRA to all-trans-4-oxo-RA. Can oxidize all-trans-13,14-dihydroretinoate (DRA) to metabolites which could include all-trans-4-oxo-DRA, all-trans-4-hydroxy-DRA, all-trans-5,8-epoxy-DRA, and all-trans-18-hydroxy-DRA. Shows preference for the following substrates: atRA &gt; 9-cis-RA &gt; 13-cis-RA. Plays a central role in germ cell development: acts by degrading RAs in the developing testis, preventing STRA8 expression, thereby leading to delay of meiosis. Required for the maintenance of the undifferentiated state of male germ cells during embryonic development in Sertoli cells, inducing arrest in G0 phase of the cell cycle and preventing meiotic entry. Plays a role in skeletal development, both at the level of patterning and in the ossification of bone and the establishment of some synovial joints. Essential for postnatal survival. Also has a significant activity in oxidation of tazarotenic acid and may therefore metabolize that xenobiotic in vivo. In Mus musculus (Mouse), this protein is Cytochrome P450 26B1 (Cyp26b1).